Consider the following 107-residue polypeptide: uncharacterized protein (107 aa).

This is an uncharacterized protein from Acanthamoeba polyphaga mimivirus (APMV).